Consider the following 829-residue polypeptide: Trimethylamine-N-oxide reductase (829 aa).

Positions 1 to 31 (MNRRDFLKGIASSSFVVLGGSSVLTPLNALA) form a signal peptide, tat-type signal. Serine 180 serves as a coordination point for Mo-bis(molybdopterin guanine dinucleotide).

Belongs to the prokaryotic molybdopterin-containing oxidoreductase family. The cofactor is Mo-bis(molybdopterin guanine dinucleotide). In terms of processing, predicted to be exported by the Tat system. The position of the signal peptide cleavage has been experimentally proven.

Its subcellular location is the periplasm. It carries out the reaction trimethylamine + 2 Fe(III)-[cytochrome c] + H2O = trimethylamine N-oxide + 2 Fe(II)-[cytochrome c] + 3 H(+). Its function is as follows. Reduces trimethylamine-N-oxide (TMAO) into trimethylamine; an anaerobic reaction coupled to energy-yielding reactions. The sequence is that of Trimethylamine-N-oxide reductase (torA) from Shewanella massilia.